A 188-amino-acid chain; its full sequence is Elongation factor P (188 aa).

Residue K34 is modified to N6-(3,6-diaminohexanoyl)-5-hydroxylysine.

This sequence belongs to the elongation factor P family. May be beta-lysylated on the epsilon-amino group of Lys-34 by the combined action of EpmA and EpmB, and then hydroxylated on the C5 position of the same residue by EpmC (if this protein is present). Lysylation is critical for the stimulatory effect of EF-P on peptide-bond formation. The lysylation moiety may extend toward the peptidyltransferase center and stabilize the terminal 3-CCA end of the tRNA. Hydroxylation of the C5 position on Lys-34 may allow additional potential stabilizing hydrogen-bond interactions with the P-tRNA.

The protein resides in the cytoplasm. It functions in the pathway protein biosynthesis; polypeptide chain elongation. Functionally, involved in peptide bond synthesis. Alleviates ribosome stalling that occurs when 3 or more consecutive Pro residues or the sequence PPG is present in a protein, possibly by augmenting the peptidyl transferase activity of the ribosome. Modification of Lys-34 is required for alleviation. The sequence is that of Elongation factor P from Methylococcus capsulatus (strain ATCC 33009 / NCIMB 11132 / Bath).